The chain runs to 775 residues: MASLIYRQLLTNSYTVELSDEINTIGSEKSQNITINPGPFAQTNYAPVTWSHGEVNDSTTIEPVLDGPYQPTSFKPPSDYWILLNPTNQQVVLEGTNKTDIWIALLLVEPNVTNQSRQYTLFGETKQITIENNTNKWKFFEMFRSNVSSEFQHKRTLTSDTKLAGFLKHYNSVWTFHGETPHATTDYSSTSNLSEVETTIHVEFYIISRSQESKCVEYINTGLPPMQNTRNIVPVALSSRSVTYQRAQVSEDIIISKTSLWKEMQYNRDIIIRFKFNNSIIKLGGLGYKWSEISFKAANYQYNYLRDGEQVTAHTTCSVNGVNNFSYNGGLLPTHFSISRYEVIKENSYVYVDYWDDSQAFRNMVYVRSLAANLNSVKCSGGNYNFQMPVGAWPVMSGGAVSLHFAGVTLSTQFTDFVSLNSLRFRFSLTVEEPPFSILRTRVSGLYGLPASNPNSGHEYYEIAGRFSLISLVPSNDDYQTPIMNSITVRQDLERQLGDLREEFNSLSQEIAITQLIDLALLPLDMFSMFSGIKSTIDAAKSMATKVMKKFKRSGLATSISELTGSLSNAASSVSRSSSIRSNISSISEWTDVSEQIAGSSDSVRNISTQTSAISRRLRLREITTQTEGMNDIDISAAVLKTKIDRSTHIRPDTLPDIITESSEKFIPKRAYRVLKDDEVMEADVDGKFFAYKVDTFEEVPFDVDKFVDLVTDSPVISAIIDFKTLKNLNDNYGITRSQALDLIRSDPRVLRDFINQNNPIIKNRIEQLILQCRL.

The tract at residues 65–223 is spike head; sequence LDGPYQPTSF…KCVEYINTGL (159 aa). Positions 247 to 478 are spike body and stalk (antigen domain); the sequence is AQVSEDIIIS…LISLVPSNDD (232 aa). The short motif at 307-309 is the DGE motif; interaction with ITGA2/ITGB1 heterodimer element; sequence DGE. A disulfide bridge connects residues Cys317 and Cys379. A hydrophobic; possible role in virus entry into host cell region spans residues 388-408; sequence MPVGAWPVMSGGAVSLHFAGV. Positions 447–449 match the YGL motif; interaction with ITGA4 motif; the sequence is YGL. Residues 483 to 510 are a coiled coil; sequence IMNSITVRQDLERQLGDLREEFNSLSQE. The spike foot stretch occupies residues 509 to 775; that stretch reads QEIAITQLID…IEQLILQCRL (267 aa). A KID motif; interaction with HSPA8 motif is present at residues 643 to 645; that stretch reads KID.

It belongs to the rotavirus VP4 family. As to quaternary structure, homotrimer. VP4 adopts a dimeric appearance above the capsid surface, while forming a trimeric base anchored inside the capsid layer. Only hints of the third molecule are observed above the capsid surface. It probably performs a series of molecular rearrangements during viral entry. Prior to trypsin cleavage, it is flexible. The priming trypsin cleavage triggers its rearrangement into rigid spikes with approximate two-fold symmetry of their protruding parts. After an unknown second triggering event, cleaved VP4 may undergo another rearrangement, in which two VP5* subunits fold back on themselves and join a third subunit to form a tightly associated trimer, shaped like a folded umbrella. Interacts with VP6. Interacts with VP7. Homotrimer. The trimer is coiled-coil stabilized by its C-terminus, however, its N-terminus, known as antigen domain or 'body', seems to be flexible allowing it to self-associate either as a dimer or a trimer. In terms of processing, proteolytic cleavage by trypsin results in activation of VP4 functions and greatly increases infectivity. The penetration into the host cell is dependent on trypsin treatment of VP4. It produces two peptides, VP5* and VP8* that remain associated with the virion. Cleavage of VP4 by trypsin probably occurs in vivo in the lumen of the intestine prior to infection of enterocytes. Trypsin seems to be incorporated into the three-layered viral particles but remains inactive as long as the viral outer capsid is intact and would only be activated upon the solubilization of the latter.

It localises to the virion. Its subcellular location is the host rough endoplasmic reticulum. It is found in the host cell membrane. The protein resides in the host cytoplasm. The protein localises to the host cytoskeleton. It localises to the host endoplasmic reticulum-Golgi intermediate compartment. Spike-forming protein that mediates virion attachment to the host epithelial cell receptors and plays a major role in cell penetration, determination of host range restriction and virulence. Rotavirus attachment and entry into the host cell probably involves multiple sequential contacts between the outer capsid proteins VP4 and VP7, and the cell receptors. It is subsequently lost, together with VP7, following virus entry into the host cell. Following entry into the host cell, low intracellular or intravesicular Ca(2+) concentration probably causes the calcium-stabilized VP7 trimers to dissociate from the virion. This step is probably necessary for the membrane-disrupting entry step and the release of VP4, which is locked onto the virion by VP7. During the virus exit from the host cell, VP4 seems to be required to target the newly formed virions to the host cell lipid rafts. In terms of biological role, forms the spike 'foot' and 'body' and acts as a membrane permeabilization protein that mediates release of viral particles from endosomal compartments into the cytoplasm. During entry, the part of VP5* that protrudes from the virus folds back on itself and reorganizes from a local dimer to a trimer. This reorganization may be linked to membrane penetration by exposing VP5* hydrophobic region. In integrin-dependent strains, VP5* targets the integrin heterodimer ITGA2/ITGB1 for cell attachment. Functionally, forms the head of the spikes and mediates the recognition of specific host cell surface glycans. It is the viral hemagglutinin and an important target of neutralizing antibodies. In sialic acid-dependent strains, VP8* binds to host cell sialic acid, most probably a ganglioside, providing the initial contact. In some other strains, VP8* mediates the attachment to histo-blood group antigens (HBGAs) for viral entry. The protein is Outer capsid protein VP4 of Homo sapiens (Human).